Reading from the N-terminus, the 225-residue chain is F-box protein SKIP27 (225 aa).

Residues 121–169 enclose the F-box domain; sequence KSRLECLPQDLLIRVICGVDHEDLKSLKLVSKSIREASLVAKTLHFAYT.

As to quaternary structure, part of a SCF (ASK-cullin-F-box) protein ligase complex. Interacts with SKP1A/ASK1 and SPK1B/ASK2.

It is found in the nucleus. The protein operates within protein modification; protein ubiquitination. Functionally, component of SCF(ASK-cullin-F-box) E3 ubiquitin ligase complexes, which may mediate the ubiquitination and subsequent proteasomal degradation of target proteins. In Arabidopsis thaliana (Mouse-ear cress), this protein is F-box protein SKIP27 (SKIP27).